The chain runs to 128 residues: Group 2 truncated hemoglobin GlbO (128 aa).

A cross-link (isodityrosine (Tyr-Tyr)) is located at residues 23 to 36 (YAQVAEDEVLRRVY). 3',4'-dihydroxyphenylalanine is present on tyrosine 36. Histidine 75 contacts heme.

It belongs to the truncated hemoglobin family. Group II subfamily. Homododecamer. Heme serves as cofactor. Contains L-DOPA (3',4'-dihydroxyphenylalanine).

The chain is Group 2 truncated hemoglobin GlbO (glbO) from Mycobacterium bovis (strain ATCC BAA-935 / AF2122/97).